The chain runs to 143 residues: Small ribosomal subunit protein uS11c (143 aa).

It belongs to the universal ribosomal protein uS11 family. As to quaternary structure, part of the 30S ribosomal subunit.

Its subcellular location is the plastid. It localises to the chloroplast. The chain is Small ribosomal subunit protein uS11c from Hordeum vulgare (Barley).